We begin with the raw amino-acid sequence, 295 residues long: WHI2-like protein P4H10.16c (295 aa).

The protein belongs to the WHI2 family.

Its subcellular location is the cytoplasm. The protein resides in the nucleus. This is WHI2-like protein P4H10.16c from Schizosaccharomyces pombe (strain 972 / ATCC 24843) (Fission yeast).